A 373-amino-acid chain; its full sequence is MDFRIIARDASCHARRGRLRTAHGTFDTPVFMPVGTQASVKSLSPDELEDLGAHIILGNTYHLLLRPGAERVARLGGLHRFMHWNRSILTDSGGFQVFSLARINRIEEDGVVFQSHIDGARHAITPETSMECQMQLGSDIAMCFDECTAYPVTYEYARESMLRTVRWAARSKEAHTLPEQSLFGIVQGGVFCDLRRDCLERLVETGFDGYALGSLSVGESKEEMLSVLEAVAPGLPAASPRYVMGVGTPEDLVEGVRCGVDMFDCVMPTRNARNGMLFTVRGGIQIKNSRYADDDRPIEEGCSCYTCRRFSRAYLRHLFLARELLAYRLNTLHNLHYYLGLMAAMREAIEANAFDRWRRSFYLDRENREPAEE.

D91 functions as the Proton acceptor in the catalytic mechanism. Substrate contacts are provided by residues 91-95 (DSGGF), D145, and Q187. The interval 245-251 (GVGTPED) is RNA binding. Residue D264 is the Nucleophile of the active site. Residues 269–273 (TRNAR) are RNA binding; important for wobble base 34 recognition. Zn(2+) contacts are provided by C302, C304, C307, and H333.

It belongs to the queuine tRNA-ribosyltransferase family. In terms of assembly, homodimer. Within each dimer, one monomer is responsible for RNA recognition and catalysis, while the other monomer binds to the replacement base PreQ1. It depends on Zn(2+) as a cofactor.

The catalysed reaction is 7-aminomethyl-7-carbaguanine + guanosine(34) in tRNA = 7-aminomethyl-7-carbaguanosine(34) in tRNA + guanine. It functions in the pathway tRNA modification; tRNA-queuosine biosynthesis. In terms of biological role, catalyzes the base-exchange of a guanine (G) residue with the queuine precursor 7-aminomethyl-7-deazaguanine (PreQ1) at position 34 (anticodon wobble position) in tRNAs with GU(N) anticodons (tRNA-Asp, -Asn, -His and -Tyr). Catalysis occurs through a double-displacement mechanism. The nucleophile active site attacks the C1' of nucleotide 34 to detach the guanine base from the RNA, forming a covalent enzyme-RNA intermediate. The proton acceptor active site deprotonates the incoming PreQ1, allowing a nucleophilic attack on the C1' of the ribose to form the product. After dissociation, two additional enzymatic reactions on the tRNA convert PreQ1 to queuine (Q), resulting in the hypermodified nucleoside queuosine (7-(((4,5-cis-dihydroxy-2-cyclopenten-1-yl)amino)methyl)-7-deazaguanosine). This chain is Queuine tRNA-ribosyltransferase, found in Syntrophobacter fumaroxidans (strain DSM 10017 / MPOB).